The primary structure comprises 151 residues: UPF0178 protein Sde_3033 (151 aa).

This sequence belongs to the UPF0178 family.

This Saccharophagus degradans (strain 2-40 / ATCC 43961 / DSM 17024) protein is UPF0178 protein Sde_3033.